A 370-amino-acid chain; its full sequence is Chaperone protein DnaJ (370 aa).

The J domain occupies aspartate 5 to glycine 69. The CR-type zinc-finger motif lies at glycine 128–arginine 210. The Zn(2+) site is built by cysteine 141, cysteine 144, cysteine 158, cysteine 161, cysteine 184, cysteine 187, cysteine 198, and cysteine 201. CXXCXGXG motif repeat units follow at residues cysteine 141–glycine 148, cysteine 158–glycine 165, cysteine 184–glycine 191, and cysteine 198–glycine 205.

This sequence belongs to the DnaJ family. In terms of assembly, homodimer. Zn(2+) serves as cofactor.

It localises to the cytoplasm. Functionally, participates actively in the response to hyperosmotic and heat shock by preventing the aggregation of stress-denatured proteins and by disaggregating proteins, also in an autonomous, DnaK-independent fashion. Unfolded proteins bind initially to DnaJ; upon interaction with the DnaJ-bound protein, DnaK hydrolyzes its bound ATP, resulting in the formation of a stable complex. GrpE releases ADP from DnaK; ATP binding to DnaK triggers the release of the substrate protein, thus completing the reaction cycle. Several rounds of ATP-dependent interactions between DnaJ, DnaK and GrpE are required for fully efficient folding. Also involved, together with DnaK and GrpE, in the DNA replication of plasmids through activation of initiation proteins. This Halalkalibacterium halodurans (strain ATCC BAA-125 / DSM 18197 / FERM 7344 / JCM 9153 / C-125) (Bacillus halodurans) protein is Chaperone protein DnaJ.